Reading from the N-terminus, the 104-residue chain is Large ribosomal subunit protein bL21 (104 aa).

Belongs to the bacterial ribosomal protein bL21 family. In terms of assembly, part of the 50S ribosomal subunit. Contacts protein L20.

In terms of biological role, this protein binds to 23S rRNA in the presence of protein L20. The protein is Large ribosomal subunit protein bL21 of Lactococcus lactis subsp. lactis (strain IL1403) (Streptococcus lactis).